Here is a 146-residue protein sequence, read N- to C-terminus: Large ribosomal subunit protein uL15 (146 aa).

Positions 18–45 (VLGRGLGCGKGKTSGRGHKGQKARSGCA) are disordered. Residues 30–39 (TSGRGHKGQK) show a composition bias toward basic residues.

The protein belongs to the universal ribosomal protein uL15 family. In terms of assembly, part of the 50S ribosomal subunit.

Binds to the 23S rRNA. The sequence is that of Large ribosomal subunit protein uL15 from Anaplasma marginale (strain St. Maries).